The chain runs to 207 residues: Sodium/potassium-transporting ATPase subunit beta-1-interacting protein 1 (207 aa).

The N-terminal stretch at 1–21 is a signal peptide; the sequence is MGKCSGRCTLVAFCCLQLVAA. Residues 22 to 34 lie on the Extracellular side of the membrane; that stretch reads LERQIFDFLGYQW. The helical transmembrane segment at 35–55 threads the bilayer; sequence APILANFLHIMAVILGIFGTV. The Cytoplasmic portion of the chain corresponds to 56-61; the sequence is QYRSRY. Residues 62–82 traverse the membrane as a helical segment; that stretch reads LILYAAWLVLWVGWNAFIICF. The Extracellular portion of the chain corresponds to 83–146; it reads YLEVGQLSQD…GCLLDYPYIE (64 aa). N-linked (GlcNAc...) asparagine glycosylation occurs at Asn100. Residues 147-167 form a helical membrane-spanning segment; that stretch reads ALSSALQIFLALFGFVFACYV. The Cytoplasmic portion of the chain corresponds to 168-207; sequence SKVFLEEEDSFDFIGGFDSYGYQAPQKTSHLQLQPLYTSG.

The protein belongs to the NKAIN family. Interacts with ATP1B1 C-terminus.

Its subcellular location is the cell membrane. This Homo sapiens (Human) protein is Sodium/potassium-transporting ATPase subunit beta-1-interacting protein 1 (NKAIN1).